The primary structure comprises 553 residues: Arginine--tRNA ligase (553 aa).

The 'HIGH' region signature appears at 130–140; sequence ANPTGDLHIGH.

Belongs to the class-I aminoacyl-tRNA synthetase family. In terms of assembly, monomer.

It is found in the cytoplasm. It catalyses the reaction tRNA(Arg) + L-arginine + ATP = L-arginyl-tRNA(Arg) + AMP + diphosphate. The polypeptide is Arginine--tRNA ligase (Staphylococcus aureus (strain MSSA476)).